The following is a 423-amino-acid chain: Phospholipase A1-IIalpha (423 aa).

Residues 194–217 (SAQEQVQGELKRLLELYKDEEISI) are a coiled coil. Catalysis depends on Ser223, which acts as the Acyl-ester intermediate. Catalysis depends on charge relay system residues Ser223, Asp290, and His327. The segment at 399–423 (HDDDVDADDNDDSSTSNQLQELNTD) is disordered. Residues 401–410 (DDVDADDNDD) are compositionally biased toward acidic residues. Polar residues predominate over residues 411–423 (SSTSNQLQELNTD).

This sequence belongs to the AB hydrolase superfamily. Lipase family.

The protein localises to the cytoplasm. In terms of biological role, acylhydrolase that catalyzes the hydrolysis of phospholipids at the sn-1 position. The chain is Phospholipase A1-IIalpha from Arabidopsis thaliana (Mouse-ear cress).